Here is a 1139-residue protein sequence, read N- to C-terminus: MSYSNGNINCDIMPTISEDGVDNGGPIDEPSDRDNIEQLMMNMLEDRDKLQEQLENYKVQLENAGLRTKEVEKERDMMKRQFEVHTQNLPQELQTMTRELCLLKEQLLEKDEEIVELKAERNNTRLLLEHLECLVSRHERSLRMTVMKRQAQNHAGVSSEVEVLKALKSLFEHHKALDEKVRERLRVAMERVATLEEELSTKGDENSSLKARIATYAAEAEEAMASNAPINGSISSESANRLIEMQEALERMKTELANSLKQSTEITTRNAELEDQLTEDAREKHAAQESIVRLKNQICELDAQRTDQETRITTFESRFLTAQRESTCIRDLNDKLEHQLANKDAAVRLNEEKVHSLQERLELAEKQLAQSLKKAESLPSVEAELQQRMEALTAAEQKSVSAEERIQRLDRNIQELSAELERAVQRERMNEEHSQRLSSTVDKLLSESNDRLQLHLKERMQALDDKNRLTQQLDGTKKIYDQAERIKDRLQRDNESLRQEIEALRQQLYNARTAQFQSRMHAIPFTHAQNIVQQQPQASIAQQSAYQMYKQQPAQQYQTVGMRRPNKGRISALQDDPNKVQTLNEQEWDRLQQAHVLANVQQAFSSSPSLADVGQSTLPRPNTAVQHQQDDMMNSGMGMPSGMQGGMQGGMGGGQDAQMLASMLQDRLDAINTEIRLIQQEKHHAERVAEQLERSSREFYDDQGISTRSSPRASPQLDNMRQHKYNTLPANVSGDRRYDIYGNPQFVDDRMVRDLDYEPRRGYNQFDEMQYERDRMSPASSVASSTDGVLGGKKKRSNSSSGLKTLGRFFNKKKNSSSDLFKRNGDYSDGEQSGTEGNQKADYDRRKKKKHELLEEAMKARTPFALWNGPTVVAWLELWVGMPAWYVAACRANVKSGAIMSALSDQEIQKEIGISNPLHRLKLRLAIQEMVSLTSPSAPRTARLTLAFGDMNHEYIGNDWLPCLGLAQYRSAFMECLLDARMLEHLSKRDLRTHLRMVDTFHRTSLQYGIMCLKKVNYDKKVLADRRKACDNINTDLLVWSNERVQRWVEEIGLGVFSRNLVDSGIHGALIALDETFDASAFAYALQIGSQDVPNRQLLEKKFIGLVNDHRQQSDPHPRSGSSRKNDSIAKSYEFHLYT.

Coiled-coil stretches lie at residues 30-144 (PSDR…SLRM), 172-298 (EHHK…KNQI), 329-517 (IRDL…AQFQ), and 655-701 (QDAQ…EFYD). 2 disordered regions span residues 700–720 (YDDQGISTRSSPRASPQLDNM) and 764–847 (NQFD…DRRK). Composition is skewed to polar residues over residues 704-719 (GISTRSSPRASPQLDN) and 778-787 (PASSVASSTD). 3 SAM domains span residues 867-933 (WNGP…MVSL), 952-1016 (NHEY…LKKV), and 1040-1109 (WSNE…LVND).

It belongs to the liprin family. Liprin-alpha subfamily. As to expression, detected in vulval muscle and other cells near the vulva; in neurons located in the lateral ganglion, posterior ganglion, ventral cord and lateral body; and in pharyngeal and body wall muscle cells.

The protein resides in the synapse. May play a role in regulating the structure of the neuronal region, called the active zone, from which synaptic vesicles send neurotransmitter signals across the synapse. This may be in association with the liprin-beta protein hlb-1. The polypeptide is Liprin-alpha (Caenorhabditis elegans).